The sequence spans 439 residues: Trigger factor (439 aa).

In terms of domain architecture, PPIase FKBP-type spans 170-255 (GDTVVIDFDG…IHELKKLETP (86 aa)).

This sequence belongs to the FKBP-type PPIase family. Tig subfamily.

The protein localises to the cytoplasm. The catalysed reaction is [protein]-peptidylproline (omega=180) = [protein]-peptidylproline (omega=0). Involved in protein export. Acts as a chaperone by maintaining the newly synthesized protein in an open conformation. Functions as a peptidyl-prolyl cis-trans isomerase. This is Trigger factor from Oenococcus oeni (strain ATCC BAA-331 / PSU-1).